The chain runs to 1332 residues: Xanthine dehydrogenase/oxidase (1332 aa).

Positions 4–91 (DELVFFVNGK…HVAVTTVEGI (88 aa)) constitute a 2Fe-2S ferredoxin-type domain. [2Fe-2S] cluster is bound by residues cysteine 43, cysteine 48, cysteine 51, cysteine 73, cysteine 113, cysteine 116, cysteine 148, and cysteine 150. In terms of domain architecture, FAD-binding PCMH-type spans 229–414 (FEGERVTWIQ…LSIEIPYSRE (186 aa)). Residues 257-264 (LVVGNTEI), phenylalanine 337, 347-351 (SLGGN), aspartate 360, leucine 404, and lysine 422 each bind FAD. Cysteine 535 and cysteine 992 are joined by a disulfide. Positions 767 and 798 each coordinate Mo-molybdopterin. Residues glutamate 802 and arginine 880 each contribute to the substrate site. Arginine 912 contributes to the Mo-molybdopterin binding site. Residues phenylalanine 914 and threonine 1010 each contribute to the substrate site. Alanine 1079 is a Mo-molybdopterin binding site. Glutamate 1261 serves as the catalytic Proton acceptor.

Belongs to the xanthine dehydrogenase family. In terms of assembly, homodimer. Interacts with BTN1A1. [2Fe-2S] cluster serves as cofactor. FAD is required as a cofactor. The cofactor is Mo-molybdopterin. Post-translationally, subject to partial proteolysis; this alters the enzyme from the dehydrogenase form (D) to the oxidase form (O). Contains sulfhydryl groups that are easily oxidized (in vitro); this alters the enzyme from the dehydrogenase form (D) to the oxidase form (O). In terms of tissue distribution, detected in milk (at protein level).

It is found in the cytoplasm. Its subcellular location is the peroxisome. The protein resides in the secreted. It catalyses the reaction xanthine + NAD(+) + H2O = urate + NADH + H(+). The catalysed reaction is hypoxanthine + NAD(+) + H2O = xanthine + NADH + H(+). The enzyme catalyses xanthine + O2 + H2O = urate + H2O2. With respect to regulation, can be converted from the dehydrogenase form (D) to the oxidase form (O) irreversibly by proteolysis or reversibly through the oxidation of sulfhydryl groups. Functionally, key enzyme in purine degradation. Catalyzes the oxidation of hypoxanthine to xanthine. Catalyzes the oxidation of xanthine to uric acid. Contributes to the generation of reactive oxygen species. The polypeptide is Xanthine dehydrogenase/oxidase (XDH) (Bos taurus (Bovine)).